Consider the following 2452-residue polypeptide: Lovastatin diketide synthase lovF (2452 aa).

A Ketosynthase family 3 (KS3) domain is found at 10–381; it reads PAPIAVVGMG…GANAHAIVER (372 aa). Active-site for beta-ketoacyl synthase activity residues include C173, H308, and H343. Residues 496-790 form a malonyl-CoA:ACP transacylase (MAT) domain region; the sequence is VFTGQGAQWF…PYLSCLSRGK (295 aa). The active-site For malonyltransferase activity is S555. The segment at 861–998 is N-terminal hotdog fold; it reads HDLIGLQEPL…GLVRVDMDQP (138 aa). A dehydratase (DH) domain region spans residues 861-1166; that stretch reads HDLIGLQEPL…LEGLVFQSLG (306 aa). Residues 861 to 1171 enclose the PKS/mFAS DH domain; that stretch reads HDLIGLQEPL…FQSLGASLGT (311 aa). H893 serves as the catalytic Proton acceptor; for dehydratase activity. Residues 997 to 1017 are disordered; that stretch reads QPASSLSNPQRADPRPWSRKT. Residues 1012 to 1171 form a C-terminal hotdog fold region; it reads PWSRKTAPQD…FQSLGASLGT (160 aa). Residue D1079 is the Proton donor; for dehydratase activity of the active site. The methyltransferase (CMet) domain stretch occupies residues 1343-1528; that stretch reads ELVRLCCHKN…RDCDSDEFYM (186 aa). An enoylreductase (ER) domain region spans residues 1745–2064; that stretch reads GLLDSLYFRK…SGQHVGKIVV (320 aa). Residues 2088–2260 form a ketoreductase (KR) domain region; sequence SYLVAGGLGG…AVTIDLGMVQ (173 aa). In terms of domain architecture, Carrier spans 2373-2450; the sequence is ASIAVIMEAM…KVAEVVLQRY (78 aa). The residue at position 2410 (S2410) is an O-(pantetheine 4'-phosphoryl)serine.

As to quaternary structure, interacts with LovD. Requires pantetheine 4'-phosphate as cofactor.

It catalyses the reaction holo-[2-methylbutanoate polyketide synthase] + 2 malonyl-CoA + S-adenosyl-L-methionine + 2 NADPH + 3 H(+) = (S)-2-methylbutanoyl-[2-methylbutanoate polyketide synthase] + S-adenosyl-L-homocysteine + 2 CO2 + 2 NADP(+) + 2 CoA + H2O. It functions in the pathway polyketide biosynthesis; lovastatin biosynthesis. Lovastatin diketide synthase; part of the gene cluster that mediates the biosynthesis of lovastatin (also known as mevinolin, mevacor or monacolin K), a hypolipidemic inhibitor of (3S)-hydroxymethylglutaryl-coenzyme A (HMG-CoA) reductase (HMGR). The first step in the biosynthesis of lovastatin is the production of dihydromonacolin L acid by the lovastatin nonaketide synthase lovB and the trans-acting enoyl reductase lovC via condensation of one acetyl-CoA unit and 8 malonyl-CoA units. Dihydromonacolin L acid is released from lovB by the thioesterase lovG. Next, dihydromonacolin L acid is oxidized by the dihydromonacolin L monooxygenase lovA twice to form monacolin J acid. The 2-methylbutyrate moiety of lovastatin is synthesized by the lovastatin diketide synthase lovF via condensation of one acetyl-CoA unit and one malonyl-CoA unit. Finally, the covalent attachment of this moiety to monacolin J acid is catalyzed by the transesterase lovD to yield lovastatin. LovD has broad substrate specificity and can also convert monacolin J to simvastatin using alpha-dimethylbutanoyl-S-methyl-3-mercaptopropionate (DMB-S-MMP) as the thioester acyl donor, and can also catalyze the reverse reaction and function as hydrolase in vitro. LovD has much higher activity with LovF-bound 2-methylbutanoate than with free diketide substrates. The chain is Lovastatin diketide synthase lovF from Aspergillus terreus (strain NIH 2624 / FGSC A1156).